We begin with the raw amino-acid sequence, 311 residues long: Cytochrome f (311 aa).

The signal sequence occupies residues 1–27; the sequence is MKHFFKSLTLAIALAASVLFWSPQAQA. Heme contacts are provided by Y28, C48, C51, and H52. Residues 279–296 traverse the membrane as a helical segment; that stretch reads WLLVFFAAITLSQILLVL.

Belongs to the cytochrome f family. In terms of assembly, the 4 large subunits of the cytochrome b6-f complex are cytochrome b6, subunit IV (17 kDa polypeptide, PetD), cytochrome f and the Rieske protein, while the 4 small subunits are PetG, PetL, PetM and PetN. The complex functions as a dimer. It depends on heme as a cofactor.

It localises to the cellular thylakoid membrane. Functionally, component of the cytochrome b6-f complex, which mediates electron transfer between photosystem II (PSII) and photosystem I (PSI), cyclic electron flow around PSI, and state transitions. This chain is Cytochrome f, found in Synechococcus elongatus.